Reading from the N-terminus, the 142-residue chain is UPF0102 protein Bcep18194_A3391 (142 aa).

Positions 1 to 27 are disordered; sequence MCHAAPARPGDGRGLPRAGDNFSGAAR.

It belongs to the UPF0102 family.

The protein is UPF0102 protein Bcep18194_A3391 of Burkholderia lata (strain ATCC 17760 / DSM 23089 / LMG 22485 / NCIMB 9086 / R18194 / 383).